The following is a 173-amino-acid chain: uncharacterized protein (173 aa).

Disordered stretches follow at residues 1-23 (MGDL…GDVA) and 48-173 (TGAA…APQR). Residues 49–60 (GAAPGSAQAGPP) show a composition bias toward low complexity. Residues 70–83 (PRGPQAPPRLPPSL) show a composition bias toward pro residues. Low complexity predominate over residues 123-136 (PACAGSSAPGSPAA).

This is an uncharacterized protein from Homo sapiens (Human).